The sequence spans 172 residues: Envelope protein UL45 (172 aa).

The Intravirion segment spans residues 1 to 27 (MPLRASEHAYRPLGPGTPPMRARLPAA). Residues 28–48 (AWVGVGTIIGGVVIIAALVLV) traverse the membrane as a helical; Signal-anchor for type II membrane protein segment. The Virion surface segment spans residues 49–172 (PSRASWALSP…TSTRNALGLP (124 aa)).

This sequence belongs to the herpesviridae HHV-1 UL45 family.

It localises to the virion membrane. Functionally, important virulence factor of HSV neurotropism. Seems to be required for glycoprotein B-induced fusion. Dispensable for growth in vitro. In Human herpesvirus 1 (strain KOS) (HHV-1), this protein is Envelope protein UL45.